A 439-amino-acid chain; its full sequence is 5-methylthioadenosine/S-adenosylhomocysteine deaminase (439 aa).

Residues H70 and H72 each contribute to the Zn(2+) site. Residues E99 and H192 each contribute to the substrate site. Zn(2+) is bound at residue H219. E222 and D307 together coordinate substrate. D307 contacts Zn(2+).

This sequence belongs to the metallo-dependent hydrolases superfamily. MTA/SAH deaminase family. Zn(2+) is required as a cofactor.

It carries out the reaction S-adenosyl-L-homocysteine + H2O + H(+) = S-inosyl-L-homocysteine + NH4(+). The catalysed reaction is S-methyl-5'-thioadenosine + H2O + H(+) = S-methyl-5'-thioinosine + NH4(+). In terms of biological role, catalyzes the deamination of 5-methylthioadenosine and S-adenosyl-L-homocysteine into 5-methylthioinosine and S-inosyl-L-homocysteine, respectively. Is also able to deaminate adenosine. This Thermodesulfovibrio yellowstonii (strain ATCC 51303 / DSM 11347 / YP87) protein is 5-methylthioadenosine/S-adenosylhomocysteine deaminase.